We begin with the raw amino-acid sequence, 225 residues long: UPF0758 protein BCQ_4241 (225 aa).

In terms of domain architecture, MPN spans 103 to 225 (SIRSPEDCAR…FVSLKEKGHI (123 aa)). Zn(2+) is bound by residues His-174, His-176, and Asp-187. Positions 174–187 (HNHPSGDPAPSRED) match the JAMM motif motif.

Belongs to the UPF0758 family.

The sequence is that of UPF0758 protein BCQ_4241 from Bacillus cereus (strain Q1).